A 121-amino-acid chain; its full sequence is Ribosome-binding factor A (121 aa).

This sequence belongs to the RbfA family. In terms of assembly, monomer. Binds 30S ribosomal subunits, but not 50S ribosomal subunits or 70S ribosomes.

The protein localises to the cytoplasm. Its function is as follows. One of several proteins that assist in the late maturation steps of the functional core of the 30S ribosomal subunit. Associates with free 30S ribosomal subunits (but not with 30S subunits that are part of 70S ribosomes or polysomes). Required for efficient processing of 16S rRNA. May interact with the 5'-terminal helix region of 16S rRNA. The protein is Ribosome-binding factor A of Agathobacter rectalis (strain ATCC 33656 / DSM 3377 / JCM 17463 / KCTC 5835 / VPI 0990) (Eubacterium rectale).